The primary structure comprises 124 residues: Small ribosomal subunit protein uS12 (124 aa).

A 3-methylthioaspartic acid modification is found at Asp-89. The segment at 104–124 (SAGVQNRNRGRSKYGTKRPKK) is disordered. Basic residues predominate over residues 111-124 (NRGRSKYGTKRPKK).

The protein belongs to the universal ribosomal protein uS12 family. In terms of assembly, part of the 30S ribosomal subunit. Contacts proteins S8 and S17. May interact with IF1 in the 30S initiation complex.

Its function is as follows. With S4 and S5 plays an important role in translational accuracy. In terms of biological role, interacts with and stabilizes bases of the 16S rRNA that are involved in tRNA selection in the A site and with the mRNA backbone. Located at the interface of the 30S and 50S subunits, it traverses the body of the 30S subunit contacting proteins on the other side and probably holding the rRNA structure together. The combined cluster of proteins S8, S12 and S17 appears to hold together the shoulder and platform of the 30S subunit. The chain is Small ribosomal subunit protein uS12 from Desulforamulus reducens (strain ATCC BAA-1160 / DSM 100696 / MI-1) (Desulfotomaculum reducens).